The chain runs to 256 residues: Undecaprenyl-diphosphatase (256 aa).

A run of 7 helical transmembrane segments spans residues 39–59, 77–97, 101–121, 135–155, 176–196, 206–226, and 233–253; these read PTDA…AVLV, RTVI…YMLF, FTGG…TGLM, ISTK…LPGV, LMVS…LDCL, LPGA…MDVL, and VSFS…TALP.

Belongs to the UppP family.

The protein resides in the cell membrane. The catalysed reaction is di-trans,octa-cis-undecaprenyl diphosphate + H2O = di-trans,octa-cis-undecaprenyl phosphate + phosphate + H(+). Its function is as follows. Catalyzes the dephosphorylation of undecaprenyl diphosphate (UPP). The protein is Undecaprenyl-diphosphatase of Methanothrix thermoacetophila (strain DSM 6194 / JCM 14653 / NBRC 101360 / PT) (Methanosaeta thermophila).